Consider the following 126-residue polypeptide: Fluoride-specific ion channel FluC (126 aa).

The next 4 membrane-spanning stretches (helical) occupy residues 7–24, 35–55, 69–89, and 98–118; these read LWVS…YFLS, FPWG…LFLV, LLIA…AYES, and WGLF…AVLG. Na(+) is bound by residues Gly-77 and Thr-80.

The protein belongs to the fluoride channel Fluc/FEX (TC 1.A.43) family.

The protein resides in the cell inner membrane. The catalysed reaction is fluoride(in) = fluoride(out). With respect to regulation, na(+) is not transported, but it plays an essential structural role and its presence is essential for fluoride channel function. In terms of biological role, fluoride-specific ion channel. Important for reducing fluoride concentration in the cell, thus reducing its toxicity. In Koribacter versatilis (strain Ellin345), this protein is Fluoride-specific ion channel FluC.